The following is a 185-amino-acid chain: Elongation factor P (185 aa).

Belongs to the elongation factor P family.

Its subcellular location is the cytoplasm. It participates in protein biosynthesis; polypeptide chain elongation. Its function is as follows. Involved in peptide bond synthesis. Stimulates efficient translation and peptide-bond synthesis on native or reconstituted 70S ribosomes in vitro. Probably functions indirectly by altering the affinity of the ribosome for aminoacyl-tRNA, thus increasing their reactivity as acceptors for peptidyl transferase. The sequence is that of Elongation factor P from Bacillus licheniformis (strain ATCC 14580 / DSM 13 / JCM 2505 / CCUG 7422 / NBRC 12200 / NCIMB 9375 / NCTC 10341 / NRRL NRS-1264 / Gibson 46).